Here is a 237-residue protein sequence, read N- to C-terminus: uncharacterized protein (237 aa).

Residue 21 to 28 coordinates ATP; that stretch reads GCDGSGKS.

It to E.coli YghR and YghT.

This is an uncharacterized protein from Escherichia coli (strain K12).